The primary structure comprises 394 residues: Ceramide glucosyltransferase (394 aa).

Residues 1 to 10 lie on the Lumenal side of the membrane; that stretch reads MAVLDLALQG. Residues 11–32 form a helical membrane-spanning segment; that stretch reads LAIFGCVLFFVLWFMHFLSIVY. Residues 33 to 195 are Cytoplasmic-facing; the sequence is TRLHLNKKVS…QVYFGTSHPR (163 aa). Asp-92 is a short sequence motif (D1). Position 144 (Asp-144) is a short sequence motif, D2. Residues 196-215 form a helical membrane-spanning segment; sequence SYISANVTGFKCVTGMSCLM. At 216 to 287 the chain is on the lumenal side; that stretch reads RKEVLDQAGG…KLRINMLPAT (72 aa). Asp-236 is a short sequence motif (D3). The active-site Proton acceptor is the Asp-236. The (Q/R)XXRW motif lies at 272 to 276; that stretch reads RMIRW. The chain crosses the membrane as a helical span at residues 288–304; the sequence is IICEPISECFVASLIIG. Topologically, residues 305-309 are cytoplasmic; sequence WAAHH. Residues 310-328 form a helical membrane-spanning segment; sequence IFRWDIMVFFMCHCLAWFI. The Lumenal segment spans residues 329–348; sequence FDYIQLRGVQGGPLNFSKLD. The chain crosses the membrane as a helical span at residues 349–369; sequence YAVAWFIRESMTIYIFLSALW. Residues 370-394 are Cytoplasmic-facing; it reads DPTISWRTGRYRLRCGGTAEEILDV.

This sequence belongs to the glycosyltransferase 2 family.

The protein localises to the golgi apparatus membrane. The enzyme catalyses an N-acylsphing-4-enine + UDP-alpha-D-glucose = a beta-D-glucosyl-(1&lt;-&gt;1')-N-acylsphing-4-enine + UDP + H(+). It carries out the reaction UDP-alpha-D-xylose + an N-acylsphing-4-enine = a beta-D-xylosyl-(1&lt;-&gt;1')-N-acylsphing-4-enine + UDP + H(+). The catalysed reaction is N-(9Z-octadecenoyl)-sphing-4-enine + UDP-alpha-D-xylose = beta-D-xylosyl-(1&lt;-&gt;1')-N-(9Z-octadecenoyl)-sphing-4-enine + UDP + H(+). It functions in the pathway lipid metabolism; sphingolipid metabolism. Its function is as follows. Participates in the initial step of the glucosylceramide-based glycosphingolipid/GSL synthetic pathway at the cytosolic surface of the Golgi. Catalyzes the transfer of glucose from UDP-glucose to ceramide to produce glucosylceramide/GlcCer (such as beta-D-glucosyl-(1&lt;-&gt;1')-N-acylsphing-4-enine). Glucosylceramide is the core component of glycosphingolipids/GSLs, amphipathic molecules consisting of a ceramide lipid moiety embedded in the outer leaflet of the membrane, linked to one of hundreds of different externally oriented oligosaccharide structures. Glycosphingolipids are essential components of membrane microdomains that mediate membrane trafficking and signal transduction. They are implicated in many fundamental cellular processes, including growth, differentiation, migration, morphogenesis, cell-to-cell and cell-to-matrix interactions. Catalyzes the synthesis of xylosylceramide/XylCer (such as beta-D-xylosyl-(1&lt;-&gt;1')-N-acylsphing-4-enine) using UDP-Xyl as xylose donor. This Xenopus tropicalis (Western clawed frog) protein is Ceramide glucosyltransferase (ugcg).